Here is a 400-residue protein sequence, read N- to C-terminus: MDKSKINFNYQSRAVYSANPQTSRGRLFHETMNTLRSPFQRDRDRIIHSNAFRRLKHKTQVFIADESDHYRTRLTHSIEVSQIARTLARALYLDEDLAESIALVHDFGHTPFGHAGEDALNEAMAPYGGFDHNAQALRIVTKLEQRYANFDGLNLTWETLEGLVKHNGPLLGPYAKNKDIPIDILQYNAKQDLQLNCFAGLEAQCAAIADDIAYNAHDVDDGLRSQFLTLDQFEQVSLTAALLNDIKKEHPQLDQTRRGYTLVRRQIKTMVEDVIKQSQENLARVKPKSISDVHQAEQTIVTFSPTMAVYERELKDFLFKNLYYHDQVLNRRNAAKRIVQKLFECYYENPDVMPENWHNKTAHLTNQELARLIADFLSGMTDHYALREYQHLFDCTDNFI.

One can recognise an HD domain in the interval 73–215; the sequence is RLTHSIEVSQ…AAIADDIAYN (143 aa).

It belongs to the dGTPase family. Type 2 subfamily.

The sequence is that of Deoxyguanosinetriphosphate triphosphohydrolase-like protein from Bartonella henselae (strain ATCC 49882 / DSM 28221 / CCUG 30454 / Houston 1) (Rochalimaea henselae).